Reading from the N-terminus, the 600-residue chain is Dihydroxy-acid dehydratase (600 aa).

Asp-82 contacts Mg(2+). Residue Cys-123 coordinates [2Fe-2S] cluster. The Mg(2+) site is built by Asp-124 and Lys-125. An N6-carboxylysine modification is found at Lys-125. Cys-192 contributes to the [2Fe-2S] cluster binding site. Residue Glu-489 participates in Mg(2+) binding. Ser-515 acts as the Proton acceptor in catalysis.

This sequence belongs to the IlvD/Edd family. In terms of assembly, homodimer. [2Fe-2S] cluster serves as cofactor. The cofactor is Mg(2+).

It catalyses the reaction (2R)-2,3-dihydroxy-3-methylbutanoate = 3-methyl-2-oxobutanoate + H2O. The catalysed reaction is (2R,3R)-2,3-dihydroxy-3-methylpentanoate = (S)-3-methyl-2-oxopentanoate + H2O. The protein operates within amino-acid biosynthesis; L-isoleucine biosynthesis; L-isoleucine from 2-oxobutanoate: step 3/4. It functions in the pathway amino-acid biosynthesis; L-valine biosynthesis; L-valine from pyruvate: step 3/4. Functions in the biosynthesis of branched-chain amino acids. Catalyzes the dehydration of (2R,3R)-2,3-dihydroxy-3-methylpentanoate (2,3-dihydroxy-3-methylvalerate) into 2-oxo-3-methylpentanoate (2-oxo-3-methylvalerate) and of (2R)-2,3-dihydroxy-3-methylbutanoate (2,3-dihydroxyisovalerate) into 2-oxo-3-methylbutanoate (2-oxoisovalerate), the penultimate precursor to L-isoleucine and L-valine, respectively. The protein is Dihydroxy-acid dehydratase of Phocaeicola vulgatus (strain ATCC 8482 / DSM 1447 / JCM 5826 / CCUG 4940 / NBRC 14291 / NCTC 11154) (Bacteroides vulgatus).